The chain runs to 943 residues: Isoleucine--tRNA ligase (943 aa).

The short motif at 58–68 is the 'HIGH' region element; it reads PYANGSIHIGH. Residue glutamate 567 coordinates L-isoleucyl-5'-AMP. A 'KMSKS' region motif is present at residues 608 to 612; the sequence is KMSKS. Lysine 611 contributes to the ATP binding site. Zn(2+)-binding residues include cysteine 906, cysteine 909, cysteine 926, and cysteine 929.

Belongs to the class-I aminoacyl-tRNA synthetase family. IleS type 1 subfamily. As to quaternary structure, monomer. The cofactor is Zn(2+).

The protein localises to the cytoplasm. The enzyme catalyses tRNA(Ile) + L-isoleucine + ATP = L-isoleucyl-tRNA(Ile) + AMP + diphosphate. Catalyzes the attachment of isoleucine to tRNA(Ile). As IleRS can inadvertently accommodate and process structurally similar amino acids such as valine, to avoid such errors it has two additional distinct tRNA(Ile)-dependent editing activities. One activity is designated as 'pretransfer' editing and involves the hydrolysis of activated Val-AMP. The other activity is designated 'posttransfer' editing and involves deacylation of mischarged Val-tRNA(Ile). The chain is Isoleucine--tRNA ligase from Pseudomonas aeruginosa (strain UCBPP-PA14).